The primary structure comprises 169 residues: MKPSSSNSRSKGHAKARRKTREELDQEARDRKRQKKRRGHAPGSRAAGGNTTSGSKGQNAPKDPRIGSKTPIPLGVAEKVTKQHKPKSEKPMLSPQAELELLETDERLDALLERLEAGETLSAEEQSWVDVKLDRIDELMQKLGLSYDDDEEEEEDEKQEDMMRLLRGN.

Disordered regions lie at residues Met-1 to Leu-99 and Ser-146 to Asn-169. Residues Ser-10–Lys-19 show a composition bias toward basic residues. A compositionally biased stretch (basic and acidic residues) spans Thr-20 to Asp-30. The segment covering Arg-31–His-40 has biased composition (basic residues). Polar residues predominate over residues Gly-49–Gln-58. The span at Tyr-147 to Gln-159 shows a compositional bias: acidic residues. Over residues Glu-160–Asn-169 the composition is skewed to basic and acidic residues.

The protein belongs to the YihI family. Interacts with Der.

Functionally, a GTPase-activating protein (GAP) that modifies Der/EngA GTPase function. May play a role in ribosome biogenesis. This is Der GTPase-activating protein YihI from Escherichia coli O81 (strain ED1a).